Here is a 149-residue protein sequence, read N- to C-terminus: Transcriptional regulator MraZ (149 aa).

SpoVT-AbrB domains lie at 7 to 54 (KYVN…GISH) and 83 to 126 (ALQL…QPQN).

This sequence belongs to the MraZ family. In terms of assembly, forms oligomers.

The protein resides in the cytoplasm. It is found in the nucleoid. The protein is Transcriptional regulator MraZ of Rickettsia canadensis (strain McKiel).